The following is a 787-amino-acid chain: Protein PAT1 homolog 2 (787 aa).

5 disordered regions span residues 94–120 (KHLG…WTQD), 134–221 (EQVQ…NASP), 338–374 (VREH…GLQF), 411–445 (LAKK…QQPQ), and 765–787 (VSES…FVRG). The span at 105–120 (GSFSRESSTATDWTQD) shows a compositional bias: polar residues. Residues 142 to 153 (SSQPQSSPNSNS) are compositionally biased toward low complexity. 3 stretches are compositionally biased toward polar residues: residues 154–171 (LYRT…QHYS), 180–198 (STFT…SSPS), and 208–221 (GGSQ…NASP). Serine 184 and serine 192 each carry phosphoserine. Residues 341–353 (HKHKSSHRSRKNR) are compositionally biased toward basic residues. 2 stretches are compositionally biased toward polar residues: residues 355-373 (GISQ…SGLQ) and 436-445 (SRNSSDQQPQ).

Activator of mRNA decapping. Involved in mRNA decay via decapping. The chain is Protein PAT1 homolog 2 from Arabidopsis thaliana (Mouse-ear cress).